A 793-amino-acid polypeptide reads, in one-letter code: Splicing factor 3A subunit 1 (793 aa).

Residues 1-42 (MPAGPVQAVPPPPPAATEPKQPTEEEASSKEDSTPSKPVVGI) are disordered. A Glycyl lysine isopeptide (Lys-Gly) (interchain with G-Cter in SUMO2) cross-link involves residue K20. Residues 21-34 (QPTEEEASSKEDST) are compositionally biased toward basic and acidic residues. Residues 52–94 (IVDKTASFVARNGPEFEARIRQNEINNPKFNFLNPNDPYHAYY) form an SURP motif 1 repeat. N6-acetyllysine is present on K55. K131 participates in a covalent cross-link: Glycyl lysine isopeptide (Lys-Gly) (interchain with G-Cter in SUMO2). The SURP motif 2 repeat unit spans residues 166–208 (VVKLTAQFVARNGRQFLTQLMQKEQRNYQFDFLRPQHSLFNYF). The segment at 318-412 (GESEEVEMEV…PAPAPDEYLV (95 aa)) is disordered. S320, S329, and S359 each carry phosphoserine. 2 stretches are compositionally biased toward acidic residues: residues 320–334 (SEEV…EEDE) and 354–364 (DMDEGSDDEEE). The span at 368–384 (VPPPPETPMPPPLPPTP) shows a compositional bias: pro residues. A compositionally biased stretch (basic and acidic residues) spans 388–397 (IVRKDYDPKA). The residue at position 413 (S413) is a Phosphoserine. K424 is covalently cross-linked (Glycyl lysine isopeptide (Lys-Gly) (interchain with G-Cter in SUMO2)). S451 bears the Phosphoserine mark. At Y456 the chain carries Phosphotyrosine. A compositionally biased stretch (basic and acidic residues) spans 488 to 502 (IGEEEIQKPEEKVTW). Disordered stretches follow at residues 488-518 (IGEE…AAQA), 530-584 (HKAK…AMPP), and 666-685 (PMPP…SKKL). A Glycyl lysine isopeptide (Lys-Gly) (interchain with G-Cter in SUMO2) cross-link involves residue K499. The residue at position 508 (S508) is a Phosphoserine. Residues 509-518 (MARTQQAAQA) are compositionally biased toward polar residues. K542 participates in a covalent cross-link: Glycyl lysine isopeptide (Lys-Gly) (interchain with G-Cter in SUMO2). Polar residues predominate over residues 563–572 (ATNIPSSAPP). Positions 666–675 (PMPPVHPPPP) are enriched in pro residues. The required and sufficient for nuclear import stretch occupies residues 680 to 702 (PASKKLKTEDSLMPEEEFLRRNK). Residue K686 forms a Glycyl lysine isopeptide (Lys-Gly) (interchain with G-Cter in SUMO2) linkage. The Ubiquitin-like domain maps to 707–793 (IKVQVPNMQD…ALKERGGRKK (87 aa)). Y759 carries the post-translational modification Phosphotyrosine.

In terms of assembly, component of the 17S U2 SnRNP complex, a ribonucleoprotein complex that contains small nuclear RNA (snRNA) U2 and a number of specific proteins. Part of the SF3A subcomplex of the 17S U2 SnRNP complex which is composed of three subunits; SF3A3/SAP61, SF3A2/SAP62 and SF3A1/SAP114. SF3A associates with the splicing factor SF3B and a 12S RNA unit to form the mature 17S U2 small nuclear ribonucleoprotein complex (17S U2 snRNP). SF3A1 functions as a scaffold that interacts directly with both SF3A2 and SF3A3. Identified in the spliceosome 'E' complex, a precursor of the spliceosome 'A' complex. Identified in the spliceosome 'A' and 'B' complexes. Identified in the spliceosome 'C' complex. Interacts with P2RX6; resulting in a reduction of the splicing activity.

It localises to the nucleus. The protein localises to the nucleus speckle. Component of the 17S U2 SnRNP complex of the spliceosome, a large ribonucleoprotein complex that removes introns from transcribed pre-mRNAs. The 17S U2 SnRNP complex (1) directly participates in early spliceosome assembly and (2) mediates recognition of the intron branch site during pre-mRNA splicing by promoting the selection of the pre-mRNA branch-site adenosine, the nucleophile for the first step of splicing. Within the 17S U2 SnRNP complex, SF3A1 is part of the SF3A subcomplex that contributes to the assembly of the 17S U2 snRNP, and the subsequent assembly of the pre-spliceosome 'E' complex and the pre-catalytic spliceosome 'A' complex. Involved in pre-mRNA splicing as a component of pre-catalytic spliceosome 'B' complexes. This chain is Splicing factor 3A subunit 1 (SF3A1), found in Bos taurus (Bovine).